Reading from the N-terminus, the 653-residue chain is MPGVVRLLALLLVPLLLGSARGLHNATQRTFQIDYRRNRFLKDGQPFRYISGSIHYFRVPRFYWKDRLLKMKMAGLNAIQTYVAWNFHELQPGRYNFSGDHDVEHFIQLAHELGLLVILRPGPYICAEWDMGGLPAWLLEKKSIVLRSSDPDYLAAVDKWLGVLLPKMRPLLYKNGGPIITVQVENEYGSYLSCDYDYLRFLQKRFHDHLGEDVLLFTTDGVNERLLQCGALQGLYATVDFSPGTNLTAAFMLQRKFEPTGPLVNSEFYTGWLDHWGQRHSTVSSKAVAFTLHDMLALGANVNMYMFIGGTNFAYWNGANIPYQPQPTSYDYDAPLSEAGDLTEKYFALRDIIQKFAKVPEGPIPPSTPKFAYGKVALNKLKTVEDALNILCPSGPIKSVYPLTFIDVKQYFGFVLYRTMLPEDCSDPTPLSSPLSGVHDRAYVSVNGVAQGILERESVITLNITGKAGATLDLLVENMGRVNYGSSINDFKGLVSNLTLGSKILTNWEIFPLDMEDAVRSHLGTWGGRDRGYHNKARAHSPPTYALPTFYVGNFTIPSGIADLPQDTFIQFPGWTKGQVWINGFNLGRYWPVRGPQMTLFVPQHILVTSTPNTIVVLELEHAPCQDGGPELCTVEFVDKPVFRTVQTHRHAN.

An N-terminal signal peptide occupies residues 1-22 (MPGVVRLLALLLVPLLLGSARG). Positions 23–27 (LHNAT) are excised as a propeptide. Asparagine 25 carries an N-linked (GlcNAc...) asparagine glycan. Residue tyrosine 82 coordinates substrate. Asparagine 96 is a glycosylation site (N-linked (GlcNAc...) asparagine). Substrate-binding residues include glutamate 128 and asparagine 186. Glutamate 187 acts as the Proton donor in catalysis. Cysteines 194 and 229 form a disulfide. Residue asparagine 246 is glycosylated (N-linked (GlcNAc...) asparagine). Glutamate 267 (nucleophile) is an active-site residue. Tyrosine 332 lines the substrate pocket. Residues asparagine 463, asparagine 497, and asparagine 554 are each glycosylated (N-linked (GlcNAc...) asparagine). A disulfide bridge links cysteine 625 with cysteine 633.

The protein belongs to the glycosyl hydrolase 35 family. As to quaternary structure, homodimer. May form higher multimers.

It is found in the lysosome. The enzyme catalyses Hydrolysis of terminal non-reducing beta-D-galactose residues in beta-D-galactosides.. In terms of biological role, cleaves beta-linked terminal galactosyl residues from gangliosides, glycoproteins, and glycosaminoglycans. The chain is Beta-galactosidase (GLB1) from Bos taurus (Bovine).